Reading from the N-terminus, the 310-residue chain is Olfactory receptor 2A1/2A42 (310 aa).

At 1-24 the chain is on the extracellular side; sequence MGENQTMVTEFLLLGFLLGPRIQM. N4 carries N-linked (GlcNAc...) asparagine glycosylation. Residues 25-48 form a helical membrane-spanning segment; sequence LLFGLFSLFYIFTLLGNGAILGLI. Residues 49-56 are Cytoplasmic-facing; sequence SLDSRLHT. Residues 57-78 form a helical membrane-spanning segment; sequence PMYFFLSHLAVVDIAYTRNTVP. At 79–99 the chain is on the extracellular side; the sequence is QMLANLLHPAKPISFAGCMTQ. C96 and C188 are joined by a disulfide. Residues 100–119 traverse the membrane as a helical segment; that stretch reads TFLCLSFGHSECLLLVLMSY. The Cytoplasmic portion of the chain corresponds to 120–138; it reads DRYVAICHPLRYSVIMTWR. The helical transmembrane segment at 139-157 threads the bilayer; it reads VCITLAVTSWTCGSLLALA. Topologically, residues 158–195 are extracellular; sequence HVVLILRLPFSGPHEINHFFCEILSVLRLACADTWLNQ. Residues 196–218 form a helical membrane-spanning segment; it reads VVIFAACVFFLVGPPSLVLVSYS. Over 219–235 the chain is Cytoplasmic; the sequence is HILAAILRIQSGEGRRK. Residues 236 to 258 form a helical membrane-spanning segment; the sequence is AFSTCSSHLCVVGLFFGSAIIMY. Topologically, residues 259–271 are extracellular; it reads MAPKSRHPEEQQK. The chain crosses the membrane as a helical span at residues 272-291; sequence VFFLFYSFFNPTLNPLIYSL. Over 292 to 310 the chain is Cytoplasmic; that stretch reads RNGEVKGALRRALGKESHS.

The protein belongs to the G-protein coupled receptor 1 family.

It is found in the cell membrane. Odorant receptor. This is Olfactory receptor 2A1/2A42 (OR2A1) from Homo sapiens (Human).